Consider the following 1118-residue polypeptide: Cytospin-A (1118 aa).

Disordered regions lie at residues 1-50 (MKKA…AALS), 75-175 (KKSN…DNQI), 294-324 (SLSPEITPGNQSDGGGTLTSSVEGSAPGSVE), and 359-391 (SSDDALDAPSSSESEGVPSIERSRKGSSGNASE). Composition is skewed to low complexity over residues 34-48 (APTGGKPVKPGAAAA), 80-90 (SSAAPSAPAPA), and 99-113 (KSSTGTSSSAKRSTS). Positions 120–131 (SSTRERLRERTR) are enriched in basic and acidic residues. The segment covering 133-145 (NQSKKLPSVSQGA) has biased composition (polar residues). Over residues 158–171 (TATEGDIRMSKSKS) the composition is skewed to basic and acidic residues. Positions 168–281 (KSKSDNQISD…LNALGFSLEQ (114 aa)) form a coiled coil. The segment covering 294 to 304 (SLSPEITPGNQ) has biased composition (polar residues). The segment covering 359-373 (SSDDALDAPSSSESE) has biased composition (low complexity). Phosphoserine is present on residues S385, S386, and S390. 2 coiled-coil regions span residues 395–450 (ACLT…MESL) and 488–808 (RYME…RGRV). 3 positions are modified to phosphoserine: S869, S882, and S888. A disordered region spans residues 916 to 999 (EHLLRTSSTS…STRSRIREER (84 aa)). A compositionally biased stretch (basic and acidic residues) spans 947 to 957 (RSSEEMKRDIS). Low complexity predominate over residues 972-992 (TTSPQLSLSSSPTASVTPSTR). The region spanning 1012–1117 (GSKRNALLKW…YVTAIYKYFE (106 aa)) is the Calponin-homology (CH) domain.

Belongs to the cytospin-A family. In terms of assembly, may interact with both microtubules and actin cytoskeleton.

The protein localises to the cytoplasm. It is found in the cytoskeleton. It localises to the spindle. Its subcellular location is the cell junction. The protein resides in the gap junction. Functionally, involved in cytokinesis and spindle organization. May play a role in actin cytoskeleton organization and microtubule stabilization and hence required for proper cell adhesion and migration. The sequence is that of Cytospin-A (Specc1l) from Rattus norvegicus (Rat).